Reading from the N-terminus, the 216-residue chain is MRVILLGPPGAGKGTQAKLISEKFSIPHISTGDIFRANIKEKTPLGIEAKRYIDNGQLVPDEVTIGIVKDRLTKDDCDNGFLLDGFPRTVAQAEALDEFLKGINKELDVALLIKVPEEFILERMTGRRVCTSCGASYHIRFNPPKIEGKCDICDNELIQRKDDTEATVKERLEVYSKQTYPLINYYKDNGIISEVNGTESIDEVFGNISNILGRDK.

10–15 is an ATP binding site; it reads GAGKGT. An NMP region spans residues 30–59; it reads STGDIFRANIKEKTPLGIEAKRYIDNGQLV. Residues Thr31, Arg36, 57-59, 85-88, and Gln92 each bind AMP; these read QLV and GFPR. The interval 126–163 is LID; the sequence is GRRVCTSCGASYHIRFNPPKIEGKCDICDNELIQRKDD. An ATP-binding site is contributed by Arg127. Cys130 and Cys133 together coordinate Zn(2+). ATP is bound at residue 136–137; sequence SY. The Zn(2+) site is built by Cys150 and Cys153. Positions 160 and 171 each coordinate AMP. An ATP-binding site is contributed by Glu199.

This sequence belongs to the adenylate kinase family. As to quaternary structure, monomer.

It is found in the cytoplasm. It catalyses the reaction AMP + ATP = 2 ADP. Its pathway is purine metabolism; AMP biosynthesis via salvage pathway; AMP from ADP: step 1/1. Its function is as follows. Catalyzes the reversible transfer of the terminal phosphate group between ATP and AMP. Plays an important role in cellular energy homeostasis and in adenine nucleotide metabolism. In Clostridium botulinum (strain 657 / Type Ba4), this protein is Adenylate kinase.